A 391-amino-acid polypeptide reads, in one-letter code: Ectodysplasin-A (391 aa).

Residues 1 to 41 (MGYPEVERRELLPAAAPRERGSQGCGCGGAPARAGEGNSCL) are Cytoplasmic-facing. Residues 42–62 (LFLGFFGLSLALHLLTLCCYL) traverse the membrane as a helical; Signal-anchor for type II membrane protein segment. Residues 63–391 (ELRSELRRER…AIRLGEAPAS (329 aa)) lie on the Extracellular side of the membrane. Disordered regions lie at residues 73 to 127 (GAES…HSDS) and 146 to 245 (YSEE…GTRE). The span at 86–101 (TSGTLSSLGGLDPDSP) shows a compositional bias: low complexity. Over residues 102–113 (ITSHLGQPSPKQ) the composition is skewed to polar residues. Residues 180 to 229 (GPPGPNGPPGPPGPPGPQGPPGIPGIPGIPGTTVMGPPGPPGPPGPQGPP) enclose the Collagen-like domain. Pro residues-rich tracts occupy residues 181–203 (PPGP…PGIP) and 216–228 (PPGP…PQGP). The 137-residue stretch at 249–385 (AVVHLQGQGS…HTTFFGAIRL (137 aa)) folds into the THD domain. N-linked (GlcNAc...) asparagine glycosylation occurs at asparagine 313. A disulfide bridge connects residues cysteine 332 and cysteine 346. Residue asparagine 372 is glycosylated (N-linked (GlcNAc...) asparagine).

It belongs to the tumor necrosis factor family. As to quaternary structure, homotrimer. The homotrimers may then dimerize and form higher-order oligomers. N-glycosylated. In terms of processing, processing by furin produces a secreted form. In terms of tissue distribution, not abundant; expressed in specific cell types of ectodermal (but not mesodermal) origin of keratinocytes, hair follicles, sweat glands. Also in adult heart, liver, muscle, pancreas, prostate, fetal liver, uterus, small intestine and umbilical cord.

Its subcellular location is the cell membrane. It localises to the secreted. In terms of biological role, cytokine which is involved in epithelial-mesenchymal signaling during morphogenesis of ectodermal organs. Functions as a ligand activating the DEATH-domain containing receptors EDAR and EDA2R. May also play a role in cell adhesion. Its function is as follows. Binds only to the receptor EDAR, while isoform 3 binds exclusively to the receptor EDA2R. Binds only to the receptor EDA2R. In Homo sapiens (Human), this protein is Ectodysplasin-A (EDA).